Consider the following 333-residue polypeptide: uncharacterized protein (333 aa).

Residues 67–274 (HFYPTTQVVS…LEMARNLAIE (208 aa)) form the Radical SAM core domain. 3 residues coordinate [4Fe-4S] cluster: Cys-82, Cys-86, and Cys-89.

[4Fe-4S] cluster is required as a cofactor.

This is an uncharacterized protein from Methanocaldococcus jannaschii (strain ATCC 43067 / DSM 2661 / JAL-1 / JCM 10045 / NBRC 100440) (Methanococcus jannaschii).